Consider the following 249-residue polypeptide: Methionine aminopeptidase 2 (249 aa).

Residue H76 participates in substrate binding. Positions 94, 105, and 168 each coordinate a divalent metal cation. H175 contacts substrate. Residues E202 and E233 each coordinate a divalent metal cation.

In terms of assembly, monomer. Co(2+) serves as cofactor. Requires Zn(2+) as cofactor. It depends on Mn(2+) as a cofactor. Fe(2+) is required as a cofactor.

The protein resides in the cytoplasm. The enzyme catalyses Release of N-terminal amino acids, preferentially methionine, from peptides and arylamides.. In terms of biological role, removes the N-terminal methionine from nascent proteins. The N-terminal methionine is often cleaved when the second residue in the primary sequence is small and uncharged (Met-Ala-, Cys, Gly, Pro, Ser, Thr, or Val). Requires deformylation of the N(alpha)-formylated initiator methionine before it can be hydrolyzed. In Bacillus subtilis (strain 168), this protein is Methionine aminopeptidase 2.